The primary structure comprises 200 residues: Small ribosomal subunit protein eS1 (200 aa).

The protein belongs to the eukaryotic ribosomal protein eS1 family.

In Thermococcus sibiricus (strain DSM 12597 / MM 739), this protein is Small ribosomal subunit protein eS1.